The chain runs to 160 residues: Cytochrome b6-f complex subunit 4 (160 aa).

Transmembrane regions (helical) follow at residues 36–56, 95–115, and 127–147; these read ILYMFPICILGALGLIAGLAI, LLGIAGMAAIPLGLMLVPFIE, and PIAMTVFLFGTAAALWLGAGA.

This sequence belongs to the cytochrome b family. PetD subfamily. The 4 large subunits of the cytochrome b6-f complex are cytochrome b6, subunit IV (17 kDa polypeptide, PetD), cytochrome f and the Rieske protein, while the 4 small subunits are PetG, PetL, PetM and PetN. The complex functions as a dimer.

The protein localises to the cellular thylakoid membrane. Component of the cytochrome b6-f complex, which mediates electron transfer between photosystem II (PSII) and photosystem I (PSI), cyclic electron flow around PSI, and state transitions. In Synechocystis sp. (strain ATCC 27184 / PCC 6803 / Kazusa), this protein is Cytochrome b6-f complex subunit 4.